A 108-amino-acid chain; its full sequence is Tyrosine-protein phosphatase 5 (108 aa).

One can recognise a Tyrosine-protein phosphatase domain in the interval 1–108 (QESTVIVMLT…QGNNPSPIIV (108 aa)). D78 contacts substrate.

This sequence belongs to the protein-tyrosine phosphatase family.

The catalysed reaction is O-phospho-L-tyrosyl-[protein] + H2O = L-tyrosyl-[protein] + phosphate. In Styela plicata (Wrinkled sea squirt), this protein is Tyrosine-protein phosphatase 5 (STY-5).